The sequence spans 639 residues: Methyl-accepting chemotaxis protein McpS (639 aa).

Topologically, residues 1 to 13 (MNSWFANISVNLK) are cytoplasmic. The helical transmembrane segment at 14 to 34 (LGLGFGLVLVLTGLLALTGWT) threads the bilayer. The Periplasmic segment spans residues 35 to 288 (SLGSLIDRSN…RDIESTQARS (254 aa)). Residues 41–283 (DRSNWMGDIG…IQLERRDIES (243 aa)) form the HBM domain. 60–65 (RIARLQ) contributes to the (S)-malate binding site. 60–65 (RIARLQ) is a binding site for succinate. Aspartate 138, arginine 183, arginine 187, and tyrosine 236 together coordinate acetate. The stretch at 191-245 (AENSSANEQAALRQLDAALADTDNLKRQLPSEDARLQQFENAVLAYRDAVRQFRD) forms a coiled coil. The (S)-malate site is built by arginine 254 and threonine 258. Arginine 254 contacts succinate. A helical membrane pass occupies residues 289-309 (LQAIATLLALLVGVLAAVLIT). The region spanning 310 to 362 (RQITRPLQDTLVAVEKIASGDLTQHMRVTRRDELGVLQQGIARMGTTLRELIS) is the HAMP domain. The Cytoplasmic segment spans residues 310-639 (RQITRPLQDT…LQTLVSQFRV (330 aa)). The 237-residue stretch at 367–603 (GVTQIASAAE…EISRSILNVR (237 aa)) folds into the Methyl-accepting transducer domain.

It belongs to the methyl-accepting chemotaxis (MCP) protein family. As to quaternary structure, homodimer. Exists as a mixture of monomers and dimers in solution. Ligand binding stabilizes the dimeric form. Methylated by CheR2.

The protein resides in the cell membrane. With respect to regulation, binding of citrate to the ligand-binding domain reduces the chemotaxis towards the strong attractants such as malate and succinate. However, in physiologically relevant niches, citrate is mostly complexed with magnesium or calcium ions, and does not bind McpS. Functionally, chemotactic-signal transducers respond to changes in the concentration of attractants and repellents in the environment, transduce a signal from the outside to the inside of the cell, and facilitate sensory adaptation through the variation of the level of methylation. McpS is a specific chemoreceptor for 6 tricarboxylic acid (TCA) cycle intermediates (succinate, fumarate, malate, oxaloacetate, citrate and isocitrate), butyrate and acetate. Malate, succinate, fumarate and oxaloacetate cause the strongest chemotactic response. The protein is Methyl-accepting chemotaxis protein McpS (mcpS) of Pseudomonas putida (strain ATCC 47054 / DSM 6125 / CFBP 8728 / NCIMB 11950 / KT2440).